Here is a 494-residue protein sequence, read N- to C-terminus: Cytochrome P450 2B11 (494 aa).

Residue Ser-128 is modified to Phosphoserine; by PKA. Cys-436 provides a ligand contact to heme.

The protein belongs to the cytochrome P450 family. Heme serves as cofactor.

It is found in the endoplasmic reticulum membrane. The protein resides in the microsome membrane. The enzyme catalyses an organic molecule + reduced [NADPH--hemoprotein reductase] + O2 = an alcohol + oxidized [NADPH--hemoprotein reductase] + H2O + H(+). Functionally, cytochromes P450 are a group of heme-thiolate monooxygenases. In liver microsomes, this enzyme is involved in an NADPH-dependent electron transport pathway. This isozyme seems responsible for metabolism of 2,2',4,4',5,5'-hexachlorobiphenyl. In Canis lupus familiaris (Dog), this protein is Cytochrome P450 2B11 (CYP2B11).